The chain runs to 414 residues: Serine hydroxymethyltransferase (414 aa).

(6S)-5,6,7,8-tetrahydrofolate-binding positions include L121 and 125–127 (GHL). Position 229 is an N6-(pyridoxal phosphate)lysine (K229).

Belongs to the SHMT family. Homodimer. It depends on pyridoxal 5'-phosphate as a cofactor.

Its subcellular location is the cytoplasm. It carries out the reaction (6R)-5,10-methylene-5,6,7,8-tetrahydrofolate + glycine + H2O = (6S)-5,6,7,8-tetrahydrofolate + L-serine. It functions in the pathway one-carbon metabolism; tetrahydrofolate interconversion. It participates in amino-acid biosynthesis; glycine biosynthesis; glycine from L-serine: step 1/1. Functionally, catalyzes the reversible interconversion of serine and glycine with tetrahydrofolate (THF) serving as the one-carbon carrier. This reaction serves as the major source of one-carbon groups required for the biosynthesis of purines, thymidylate, methionine, and other important biomolecules. Also exhibits THF-independent aldolase activity toward beta-hydroxyamino acids, producing glycine and aldehydes, via a retro-aldol mechanism. The polypeptide is Serine hydroxymethyltransferase (Herminiimonas arsenicoxydans).